A 411-amino-acid chain; its full sequence is Fructose-1,6-bisphosphatase, chloroplastic (411 aa).

Residues 1 to 53 constitute a chloroplast transit peptide; that stretch reads MAATAGATPSSHLLLSSSRHVAASPQPRILFPSLSGKRVAVGKNHHATGVRCM. 5 residues coordinate Mg(2+): E133, E162, D183, L185, and D186. 186–189 is a binding site for substrate; the sequence is DGSS. C227 and C232 are disulfide-bonded. N291, Y323, Y341, Y343, and K353 together coordinate substrate. E359 contributes to the Mg(2+) binding site.

It belongs to the FBPase class 1 family. As to quaternary structure, homotetramer. It depends on Mg(2+) as a cofactor.

The protein resides in the plastid. Its subcellular location is the chloroplast stroma. The enzyme catalyses beta-D-fructose 1,6-bisphosphate + H2O = beta-D-fructose 6-phosphate + phosphate. It functions in the pathway carbohydrate biosynthesis; Calvin cycle. This is Fructose-1,6-bisphosphatase, chloroplastic (FBP) from Brassica napus (Rape).